Reading from the N-terminus, the 37-residue chain is Glucagon-1 (37 aa).

It belongs to the glucagon family.

It is found in the secreted. In terms of biological role, glucagon plays a key role in glucose metabolism and homeostasis. Regulates blood glucose by increasing gluconeogenesis and decreasing glycolysis. This is Glucagon-1 from Huso dauricus (Kaluga sturgeon).